Reading from the N-terminus, the 460-residue chain is MLKILVPTIMLFLVTWSSPKKWLWPITTTHSLLIALLSLLWFKWNMDMGWDFSNHYLAIDPLSAPLLILTCWLLPLMILASQNHISTEPIIRQRIYITLLISLQTFLIMAFSATELIMFYIMFEATLIPTLIIITRWGNQTERLNAGTYFLFYTLIGSLPLLVALLLMQNDLGSLSMIIIQYPQPLSLSTWADKFWWTACLIAFLVKMPLYGVHLWLPKAHVEAPIAGSMILAAVLLKLGGYGMMRIIVMLNPLTKEMAYPFLILAIWGVIMTSSICLRQTDLKSLIAYSSVSHMGLVAGAIMIQTPWSFAGAITLMIAHGLVSSALFCLANTNYERTHSRTLLLARGIQVMLPLMATWWFIANLANLALPPTPNLMGELLIISSLFNWSSWTILLTGLGVLITASYSLYMFLMTQRGPASQHLLSLNPSYTREHLLLNLHLIPMLLLILKPELIWGWTF.

The next 13 helical transmembrane spans lie at 22–42, 59–79, 93–113, 114–134, 148–168, 195–215, 225–245, 258–278, 286–306, 310–330, 351–371, 394–414, and 440–460; these read WLWP…LLWF, IDPL…LMIL, QRIY…AFSA, TELI…LIII, TYFL…LLLM, FWWT…GVHL, PIAG…YGMM, MAYP…SICL, LIAY…MIQT, FAGA…LFCL, VMLP…LALP, ILLT…MFLM, and LHLI…GWTF.

Belongs to the complex I subunit 4 family.

Its subcellular location is the mitochondrion membrane. The enzyme catalyses a ubiquinone + NADH + 5 H(+)(in) = a ubiquinol + NAD(+) + 4 H(+)(out). In terms of biological role, core subunit of the mitochondrial membrane respiratory chain NADH dehydrogenase (Complex I) that is believed to belong to the minimal assembly required for catalysis. Complex I functions in the transfer of electrons from NADH to the respiratory chain. The immediate electron acceptor for the enzyme is believed to be ubiquinone. The protein is NADH-ubiquinone oxidoreductase chain 4 (MT-ND4) of Squalus acanthias (Spiny dogfish).